The following is a 112-amino-acid chain: Putative pterin-4-alpha-carbinolamine dehydratase (112 aa).

Belongs to the pterin-4-alpha-carbinolamine dehydratase family.

It carries out the reaction (4aS,6R)-4a-hydroxy-L-erythro-5,6,7,8-tetrahydrobiopterin = (6R)-L-erythro-6,7-dihydrobiopterin + H2O. The polypeptide is Putative pterin-4-alpha-carbinolamine dehydratase (Shewanella loihica (strain ATCC BAA-1088 / PV-4)).